The following is a 204-amino-acid chain: Outer-membrane lipoprotein carrier protein (204 aa).

The signal sequence occupies residues 1–21 (MKKLLVACCVVSGMMSASVLA).

The protein belongs to the LolA family. Monomer.

It localises to the periplasm. In terms of biological role, participates in the translocation of lipoproteins from the inner membrane to the outer membrane. Only forms a complex with a lipoprotein if the residue after the N-terminal Cys is not an aspartate (The Asp acts as a targeting signal to indicate that the lipoprotein should stay in the inner membrane). The polypeptide is Outer-membrane lipoprotein carrier protein (Edwardsiella ictaluri (strain 93-146)).